Consider the following 947-residue polypeptide: Valine--tRNA ligase (947 aa).

The short motif at 45–55 (PNVTGSLHMGH) is the 'HIGH' region element. Residues 591 to 595 (KMSKS) carry the 'KMSKS' region motif. ATP is bound at residue Lys-594. A coiled-coil region spans residues 879 to 943 (DLAAEQARLE…ASLRTALTRV (65 aa)).

The protein belongs to the class-I aminoacyl-tRNA synthetase family. ValS type 1 subfamily. Monomer.

The protein localises to the cytoplasm. It catalyses the reaction tRNA(Val) + L-valine + ATP = L-valyl-tRNA(Val) + AMP + diphosphate. Functionally, catalyzes the attachment of valine to tRNA(Val). As ValRS can inadvertently accommodate and process structurally similar amino acids such as threonine, to avoid such errors, it has a 'posttransfer' editing activity that hydrolyzes mischarged Thr-tRNA(Val) in a tRNA-dependent manner. The polypeptide is Valine--tRNA ligase (Agrobacterium fabrum (strain C58 / ATCC 33970) (Agrobacterium tumefaciens (strain C58))).